We begin with the raw amino-acid sequence, 1099 residues long: SLIT-ROBO Rho GTPase-activating protein 3 (1099 aa).

The F-BAR domain maps to 19–314 (AQIKEIRTQL…AVDNLDSRSD (296 aa)). A coiled-coil region spans residues 352–392 (QTELLMRYHQLQSRLATLKIENEEVRKTLDATMQTLQDMLT). The tract at residues 470–493 (GERAECGTTRPPCLPPKPQKMRRP) is disordered. One can recognise a Rho-GAP domain in the interval 506 to 694 (GSMEAFIKDS…TIIIHHEAIF (189 aa)). One can recognise an SH3 domain in the interval 744 to 803 (VEQIEAIAKFDYVGRSPRELSFKKGASLLLYHRASEDWWEGRHNGVDGLIPHQYIVVQDM). Residues 809-820 (DSLSQKADSEAS) are compositionally biased toward polar residues. The interval 809–846 (DSLSQKADSEASSGPLLDDKASSKNDLQSPTEHISDYG) is disordered. Ser817, Ser820, Ser821, Ser837, and Ser858 each carry phosphoserine. A disordered region spans residues 861–911 (AAIPRRRSGGDTHSPPRGLGPSIDTPPRAAACPSSPHKIPLSRGRIESPEK). Residues 952 to 987 (HKSLEAEALAEDIEKTMSTALHELRELERQNTVKQA) adopt a coiled-coil conformation. Ser954 is modified (phosphoserine). Disordered regions lie at residues 994-1014 (TLEP…SPLH) and 1045-1099 (ARLA…SGTM). A compositionally biased stretch (low complexity) spans 1060-1074 (VRPVVQHRSSSSSSS). Residues 1089 to 1099 (PNSSSDKSGTM) show a composition bias toward polar residues.

In terms of assembly, homodimer. Forms a heterooligomer with SRGAP1 and SRGAP2 through its F-BAR domain. Interacts with WASF1. Probably interacts with ROBO1. Interacts with FASLG.

In terms of biological role, GTPase-activating protein for RAC1 and perhaps CDC42, but not for RhoA small GTPase. May attenuate RAC1 signaling in neurons. The sequence is that of SLIT-ROBO Rho GTPase-activating protein 3 (Srgap3) from Mus musculus (Mouse).